Consider the following 292-residue polypeptide: NAD kinase (292 aa).

Asp73 serves as the catalytic Proton acceptor. NAD(+)-binding positions include 73-74 (DG), 147-148 (NE), His158, Arg175, Asp177, 188-193 (TAYSLS), and Gln247.

Belongs to the NAD kinase family. It depends on a divalent metal cation as a cofactor.

It localises to the cytoplasm. It catalyses the reaction NAD(+) + ATP = ADP + NADP(+) + H(+). Involved in the regulation of the intracellular balance of NAD and NADP, and is a key enzyme in the biosynthesis of NADP. Catalyzes specifically the phosphorylation on 2'-hydroxyl of the adenosine moiety of NAD to yield NADP. The chain is NAD kinase from Sodalis glossinidius (strain morsitans).